The following is a 504-amino-acid chain: Probable cytosol aminopeptidase (504 aa).

2 residues coordinate Mn(2+): lysine 263 and aspartate 268. Residue lysine 275 is part of the active site. Mn(2+) contacts are provided by aspartate 286, aspartate 345, and glutamate 347. Residue arginine 349 is part of the active site.

The protein belongs to the peptidase M17 family. Mn(2+) is required as a cofactor.

The protein resides in the cytoplasm. The enzyme catalyses Release of an N-terminal amino acid, Xaa-|-Yaa-, in which Xaa is preferably Leu, but may be other amino acids including Pro although not Arg or Lys, and Yaa may be Pro. Amino acid amides and methyl esters are also readily hydrolyzed, but rates on arylamides are exceedingly low.. It catalyses the reaction Release of an N-terminal amino acid, preferentially leucine, but not glutamic or aspartic acids.. Its function is as follows. Presumably involved in the processing and regular turnover of intracellular proteins. Catalyzes the removal of unsubstituted N-terminal amino acids from various peptides. The chain is Probable cytosol aminopeptidase from Sulfurihydrogenibium sp. (strain YO3AOP1).